The primary structure comprises 184 residues: Phosphonoformate cytidylyltransferase (184 aa).

The enzyme catalyses phosphonoformate + CTP = CMP-5'-phosphonoformate + diphosphate. The protein operates within secondary metabolite biosynthesis; bialaphos biosynthesis. Functionally, catalyzes the displacement of the beta- and gamma-phosphates of CTP by phosphonoformate to produce CMP-5'-phosphonoformate, an intermediate in the biosynthesis of phosphinothricin tripeptide (PTT), also known as bialaphos (BA), a natural-product antibiotic and potent herbicide. This chain is Phosphonoformate cytidylyltransferase, found in Streptomyces viridochromogenes (strain DSM 40736 / JCM 4977 / BCRC 1201 / Tue 494).